The sequence spans 69 residues: MIYKVFFQASTTEVPVREHTDSLYVEAVSERDVRDKLKKHSYNIEFIQPVDGAFLDYERESENFKVLEL.

The protein belongs to the RNA polymerase subunit epsilon family. As to quaternary structure, RNAP is composed of a core of 2 alpha, a beta and a beta' subunit. The core is associated with a delta subunit, and at least one of epsilon or omega. When a sigma factor is associated with the core the holoenzyme is formed, which can initiate transcription.

It carries out the reaction RNA(n) + a ribonucleoside 5'-triphosphate = RNA(n+1) + diphosphate. In terms of biological role, a non-essential component of RNA polymerase (RNAP). The polypeptide is DNA-directed RNA polymerase subunit epsilon (Bacillus pumilus (strain SAFR-032)).